Consider the following 495-residue polypeptide: Cobyric acid synthase (495 aa).

The GATase cobBQ-type domain maps to 250–444 (SLKISILRLP…LHGLFDNGAW (195 aa)). Catalysis depends on Cys-331, which acts as the Nucleophile. His-436 is a catalytic residue.

Belongs to the CobB/CobQ family. CobQ subfamily.

It functions in the pathway cofactor biosynthesis; adenosylcobalamin biosynthesis. Functionally, catalyzes amidations at positions B, D, E, and G on adenosylcobyrinic A,C-diamide. NH(2) groups are provided by glutamine, and one molecule of ATP is hydrogenolyzed for each amidation. This chain is Cobyric acid synthase, found in Rippkaea orientalis (strain PCC 8801 / RF-1) (Cyanothece sp. (strain PCC 8801)).